Consider the following 484-residue polypeptide: Membrane-bound lytic murein transglycosylase F (484 aa).

The N-terminal stretch at 1-18 (MKGLLLRIIAAFALVLWA) is a signal peptide. The tract at residues 19–267 (IDMVFPWQQM…RIEEKYFNHF (249 aa)) is non-LT domain. Residues 268–484 (SQFDYVDMRQ…PLTDNQEKQE (217 aa)) are LT domain. Residue Glu312 is part of the active site. Residues 459 to 484 (ADNKDKPSETDENLPLPLTDNQEKQE) are disordered.

The protein in the N-terminal section; belongs to the bacterial solute-binding protein 3 family. It in the C-terminal section; belongs to the transglycosylase Slt family.

The protein localises to the cell outer membrane. The catalysed reaction is Exolytic cleavage of the (1-&gt;4)-beta-glycosidic linkage between N-acetylmuramic acid (MurNAc) and N-acetylglucosamine (GlcNAc) residues in peptidoglycan, from either the reducing or the non-reducing ends of the peptidoglycan chains, with concomitant formation of a 1,6-anhydrobond in the MurNAc residue.. Its function is as follows. Murein-degrading enzyme that degrades murein glycan strands and insoluble, high-molecular weight murein sacculi, with the concomitant formation of a 1,6-anhydromuramoyl product. Lytic transglycosylases (LTs) play an integral role in the metabolism of the peptidoglycan (PG) sacculus. Their lytic action creates space within the PG sacculus to allow for its expansion as well as for the insertion of various structures such as secretion systems and flagella. This is Membrane-bound lytic murein transglycosylase F from Mannheimia succiniciproducens (strain KCTC 0769BP / MBEL55E).